The following is a 458-amino-acid chain: Glutamate--tRNA ligase 2 (458 aa).

The 'HIGH' region motif lies at 20-30; sequence PSPTGLIHVGN. Positions 251–255 match the 'KMSKS' region motif; the sequence is GLSKR. Lys254 contacts ATP.

This sequence belongs to the class-I aminoacyl-tRNA synthetase family. Glutamate--tRNA ligase type 1 subfamily. As to quaternary structure, monomer.

Its subcellular location is the cytoplasm. It carries out the reaction tRNA(Glu) + L-glutamate + ATP = L-glutamyl-tRNA(Glu) + AMP + diphosphate. Its function is as follows. Catalyzes the attachment of glutamate to tRNA(Glu) in a two-step reaction: glutamate is first activated by ATP to form Glu-AMP and then transferred to the acceptor end of tRNA(Glu). The protein is Glutamate--tRNA ligase 2 of Xanthobacter autotrophicus (strain ATCC BAA-1158 / Py2).